The sequence spans 190 residues: Threonylcarbamoyl-AMP synthase (190 aa).

The 184-residue stretch at 7–190 (ADAISFIVDV…ALTGELFRQG (184 aa)) folds into the YrdC-like domain.

This sequence belongs to the SUA5 family. TsaC subfamily.

The protein localises to the cytoplasm. It carries out the reaction L-threonine + hydrogencarbonate + ATP = L-threonylcarbamoyladenylate + diphosphate + H2O. Required for the formation of a threonylcarbamoyl group on adenosine at position 37 (t(6)A37) in tRNAs that read codons beginning with adenine. Catalyzes the conversion of L-threonine, HCO(3)(-)/CO(2) and ATP to give threonylcarbamoyl-AMP (TC-AMP) as the acyladenylate intermediate, with the release of diphosphate. This chain is Threonylcarbamoyl-AMP synthase, found in Cronobacter sakazakii (strain ATCC BAA-894) (Enterobacter sakazakii).